Consider the following 306-residue polypeptide: MEVTFFGTSAGLPTKERNTQSIALNLEPYSNSIWLFDVGEGTQHQILRHSIKLGKIDHIFITHMHGDHIFGLPGLLTSRSFQGGENKPLTIIGPKGIQNYIETSLQLSESHLNYPITYIEINQQLAYHHNGFTVQAEMLNHGIPSFGYRIEAPIMPGTINVEALRGIGLEPGPKYQEVKLQETFEYKGLIYNSDDFKGKAKPGPIISIFGDTKPCENEYELAKNSDLMIHEATYIEGDKKLANNYHHSHIDDVFNLIKQANVNKSLITHISNRYNIDEVTSIYNELSLDQTSPHFYFVKDFDTFKI.

Zn(2+) is bound by residues His63, His65, Asp67, His68, His141, Asp211, and His269. The Proton acceptor role is filled by Asp67.

This sequence belongs to the RNase Z family. As to quaternary structure, homodimer. Zn(2+) serves as cofactor.

It catalyses the reaction Endonucleolytic cleavage of RNA, removing extra 3' nucleotides from tRNA precursor, generating 3' termini of tRNAs. A 3'-hydroxy group is left at the tRNA terminus and a 5'-phosphoryl group is left at the trailer molecule.. In terms of biological role, zinc phosphodiesterase, which displays some tRNA 3'-processing endonuclease activity. Probably involved in tRNA maturation, by removing a 3'-trailer from precursor tRNA. This Staphylococcus epidermidis (strain ATCC 12228 / FDA PCI 1200) protein is Ribonuclease Z.